We begin with the raw amino-acid sequence, 307 residues long: Ribosomal RNA small subunit methyltransferase H (307 aa).

S-adenosyl-L-methionine-binding positions include 33–35, Asp-51, Phe-82, Asp-96, and Gln-103; that span reads GGY.

This sequence belongs to the methyltransferase superfamily. RsmH family.

The protein resides in the cytoplasm. The enzyme catalyses cytidine(1402) in 16S rRNA + S-adenosyl-L-methionine = N(4)-methylcytidine(1402) in 16S rRNA + S-adenosyl-L-homocysteine + H(+). Functionally, specifically methylates the N4 position of cytidine in position 1402 (C1402) of 16S rRNA. The protein is Ribosomal RNA small subunit methyltransferase H of Rickettsia rickettsii (strain Iowa).